The primary structure comprises 357 residues: Mannonate dehydratase (357 aa).

The protein belongs to the mannonate dehydratase family. Fe(2+) is required as a cofactor. Mn(2+) serves as cofactor.

The enzyme catalyses D-mannonate = 2-dehydro-3-deoxy-D-gluconate + H2O. The protein operates within carbohydrate metabolism; pentose and glucuronate interconversion. In terms of biological role, catalyzes the dehydration of D-mannonate. This chain is Mannonate dehydratase, found in Enterococcus faecalis (strain ATCC 700802 / V583).